Consider the following 376-residue polypeptide: NIF3-like protein 1 (376 aa).

Residue lysine 108 is modified to N6-acetyllysine. The mediates interaction with COPS2 stretch occupies residues 243–376 (LLLHTGMGRL…ETDRDPLRVV (134 aa)). Residue threonine 254 is modified to Phosphothreonine. Serine 258 carries the phosphoserine modification.

It belongs to the GTP cyclohydrolase I type 2/NIF3 family. Homodimer. Interacts with COPS2. Interacts with THOC7. In terms of tissue distribution, ubiquitous. Detected in all tissues tested with higher expression in cerebellum, heart and kidney and to a lower level in cerebrum, lung, liver, spleen and muscle.

It is found in the cytoplasm. The protein resides in the nucleus. Functionally, may function as a transcriptional corepressor through its interaction with COPS2, negatively regulating the expression of genes involved in neuronal differentiation. The sequence is that of NIF3-like protein 1 from Mus musculus (Mouse).